Reading from the N-terminus, the 501-residue chain is Glycerol kinase (501 aa).

An ADP-binding site is contributed by Thr14. Residues Thr14, Thr15, and Ser16 each coordinate ATP. Residue Thr14 participates in sn-glycerol 3-phosphate binding. Arg18 contacts ADP. Sn-glycerol 3-phosphate is bound by residues Arg84, Glu85, Tyr136, and Asp246. Glycerol is bound by residues Arg84, Glu85, Tyr136, Asp246, and Gln247. Residues Thr268 and Gly311 each contribute to the ADP site. Thr268, Gly311, Gln315, and Gly412 together coordinate ATP. ADP is bound by residues Gly412 and Asn416.

Belongs to the FGGY kinase family. Homotetramer and homodimer (in equilibrium).

The enzyme catalyses glycerol + ATP = sn-glycerol 3-phosphate + ADP + H(+). The protein operates within polyol metabolism; glycerol degradation via glycerol kinase pathway; sn-glycerol 3-phosphate from glycerol: step 1/1. Its activity is regulated as follows. Activated by phosphorylation and inhibited by fructose 1,6-bisphosphate (FBP). Functionally, key enzyme in the regulation of glycerol uptake and metabolism. Catalyzes the phosphorylation of glycerol to yield sn-glycerol 3-phosphate. The protein is Glycerol kinase of Desulforamulus reducens (strain ATCC BAA-1160 / DSM 100696 / MI-1) (Desulfotomaculum reducens).